The following is a 562-amino-acid chain: Furostanol glycoside 26-O-beta-glucosidase (562 aa).

Residues 1 to 44 (MAAQLGLPLVSCHRGASQAASSSAHLVPGASAIMQAGNRRQKMR) constitute a chloroplast transit peptide. Residues glutamine 110, histidine 214, and 259–260 (NE) each bind a beta-D-glucoside. The active-site Proton donor is the glutamate 260. Cysteine 279 and cysteine 285 are disulfide-bonded. A beta-D-glucoside is bound by residues tyrosine 401, glutamate 472, tryptophan 518, 525–526 (EW), and phenylalanine 534. Residue glutamate 472 is the Nucleophile of the active site.

Belongs to the glycosyl hydrolase 1 family. As to quaternary structure, heterodimer. The N-terminus of the larger subunit is blocked and the smaller subunit might be derived from the larger one.

The protein resides in the plastid. The protein localises to the chloroplast. It carries out the reaction protodioscin + H2O = 26-deglucoprotodioscin + D-glucose. Its activity is regulated as follows. Partially inhibited by glucono-1,5-lactone, conduritol beta-epoxide and diosgenin, but not by beta-sitosterol or cholesterol. Its function is as follows. Beta-glucosidase involved in saponin metabolism. Highly specific for the cleavage of C-26-bound glucose moiety of furostanol glycosides such as protogracillin and protodioscin. No activity with nuatigenin glycoside. Convers furostanol glycosides to spirostanol glycosides. The protein is Furostanol glycoside 26-O-beta-glucosidase of Hellenia speciosa (Crepe ginger).